The following is a 281-amino-acid chain: 2-dehydro-3-deoxyphosphooctonate aldolase (281 aa).

The protein belongs to the KdsA family.

The protein resides in the cytoplasm. It carries out the reaction D-arabinose 5-phosphate + phosphoenolpyruvate + H2O = 3-deoxy-alpha-D-manno-2-octulosonate-8-phosphate + phosphate. Its pathway is carbohydrate biosynthesis; 3-deoxy-D-manno-octulosonate biosynthesis; 3-deoxy-D-manno-octulosonate from D-ribulose 5-phosphate: step 2/3. It participates in bacterial outer membrane biogenesis; lipopolysaccharide biosynthesis. This chain is 2-dehydro-3-deoxyphosphooctonate aldolase, found in Pseudomonas paraeruginosa (strain DSM 24068 / PA7) (Pseudomonas aeruginosa (strain PA7)).